We begin with the raw amino-acid sequence, 78 residues long: Large ribosomal subunit protein bL28 (78 aa).

This sequence belongs to the bacterial ribosomal protein bL28 family.

The sequence is that of Large ribosomal subunit protein bL28 from Pectobacterium carotovorum subsp. carotovorum (strain PC1).